Consider the following 169-residue polypeptide: Orotate phosphoribosyltransferase (169 aa).

5-phospho-alpha-D-ribose 1-diphosphate contacts are provided by residues R86, K90, H92, and 111-119; that span reads EDVTTSGGS. Positions 115 and 143 each coordinate orotate.

This sequence belongs to the purine/pyrimidine phosphoribosyltransferase family. PyrE subfamily. As to quaternary structure, homodimer. The cofactor is Mg(2+).

The enzyme catalyses orotidine 5'-phosphate + diphosphate = orotate + 5-phospho-alpha-D-ribose 1-diphosphate. It participates in pyrimidine metabolism; UMP biosynthesis via de novo pathway; UMP from orotate: step 1/2. In terms of biological role, catalyzes the transfer of a ribosyl phosphate group from 5-phosphoribose 1-diphosphate to orotate, leading to the formation of orotidine monophosphate (OMP). The protein is Orotate phosphoribosyltransferase of Methanocorpusculum labreanum (strain ATCC 43576 / DSM 4855 / Z).